We begin with the raw amino-acid sequence, 316 residues long: Transaldolase (316 aa).

The Schiff-base intermediate with substrate role is filled by K132.

It belongs to the transaldolase family. Type 1 subfamily.

It is found in the cytoplasm. It catalyses the reaction D-sedoheptulose 7-phosphate + D-glyceraldehyde 3-phosphate = D-erythrose 4-phosphate + beta-D-fructose 6-phosphate. The protein operates within carbohydrate degradation; pentose phosphate pathway; D-glyceraldehyde 3-phosphate and beta-D-fructose 6-phosphate from D-ribose 5-phosphate and D-xylulose 5-phosphate (non-oxidative stage): step 2/3. Its function is as follows. Transaldolase is important for the balance of metabolites in the pentose-phosphate pathway. This Methylomonas aminofaciens protein is Transaldolase.